The following is a 1755-amino-acid chain: Transposon Ty1-ML1 Gag-Pol polyprotein (1755 aa).

Polar residues-rich tracts occupy residues 1–23 (MESQ…SVTS), 48–60 (TKAN…TPAS), and 127–152 (QSQF…GNTF). 3 disordered regions span residues 1-88 (MESQ…YPQQ), 126-173 (PQSQ…RPPP), and 352-421 (GSRN…SKST). Low complexity predominate over residues 153–165 (TDSSSADSDMTST). An RNA-binding region spans residues 299 to 401 (NNGIHINNKV…NSKSKTARAH (103 aa)). Positions 402 to 418 (NVSTSNNSPSTDNDSIS) are enriched in low complexity. Catalysis depends on aspartate 461, which acts as the For protease activity; shared with dimeric partner. An integrase-type zinc finger-like region spans residues 583 to 640 (NVHTSESTRKYPYPFIHRMLAHANAQTIRYSLKNNTITYFNESDVDWSSAIDYQCPDC). The region spanning 660 to 835 (NSYEPFQYLH…AGLDISTLLP (176 aa)) is the Integrase catalytic domain. Mg(2+) is bound by residues aspartate 671 and aspartate 736. Disordered regions lie at residues 956-1087 (SKAV…ETEK), 1092-1111 (RSPS…NIVP), and 1130-1171 (DLPL…DSNA). The segment covering 960-969 (SPTDSTPPST) has biased composition (low complexity). Positions 1005 to 1015 (STPQISNIEST) are enriched in polar residues. The segment covering 1038–1053 (ESSHASKSKDFRHSDS) has biased composition (basic and acidic residues). Polar residues-rich tracts occupy residues 1054–1082 (YSEN…QISD) and 1101–1111 (PENNSSHNIVP). The short motif at 1178 to 1212 (KKRSLEDNETEIKVSRDTWNTKNMRSLEPPRSKKR) is the Bipartite nuclear localization signal element. The Reverse transcriptase Ty1/copia-type domain occupies 1338–1476 (NNYYITQLDI…DILGLEIKYQ (139 aa)). 6 residues coordinate Mg(2+): aspartate 1346, aspartate 1427, aspartate 1428, aspartate 1610, glutamate 1652, and aspartate 1685. The RNase H Ty1/copia-type domain maps to 1610–1752 (DASYGNQPYY…IKTFKLLTNK (143 aa)).

The capsid protein forms a homotrimer, from which the VLPs are assembled. The protease is a homodimer, whose active site consists of two apposed aspartic acid residues. Post-translationally, initially, virus-like particles (VLPs) are composed of the structural unprocessed proteins Gag and Gag-Pol, and also contain the host initiator methionine tRNA (tRNA(i)-Met) which serves as a primer for minus-strand DNA synthesis, and a dimer of genomic Ty RNA. Processing of the polyproteins occurs within the particle and proceeds by an ordered pathway, called maturation. First, the protease (PR) is released by autocatalytic cleavage of the Gag-Pol polyprotein yielding capsid protein p45 and a Pol-p154 precursor protein. This cleavage is a prerequisite for subsequent processing of Pol-p154 at the remaining sites to release the mature structural and catalytic proteins. Maturation takes place prior to the RT reaction and is required to produce transposition-competent VLPs.

The protein resides in the cytoplasm. Its subcellular location is the nucleus. The enzyme catalyses DNA(n) + a 2'-deoxyribonucleoside 5'-triphosphate = DNA(n+1) + diphosphate. It catalyses the reaction Endonucleolytic cleavage to 5'-phosphomonoester.. Its function is as follows. Capsid protein (CA) is the structural component of the virus-like particle (VLP), forming the shell that encapsulates the retrotransposons dimeric RNA genome. The particles are assembled from trimer-clustered units and there are holes in the capsid shells that allow for the diffusion of macromolecules. CA also has nucleocapsid-like chaperone activity, promoting primer tRNA(i)-Met annealing to the multipartite primer-binding site (PBS), dimerization of Ty1 RNA and initiation of reverse transcription. In terms of biological role, the aspartyl protease (PR) mediates the proteolytic cleavages of the Gag and Gag-Pol polyproteins after assembly of the VLP. Reverse transcriptase/ribonuclease H (RT) is a multifunctional enzyme that catalyzes the conversion of the retro-elements RNA genome into dsDNA within the VLP. The enzyme displays a DNA polymerase activity that can copy either DNA or RNA templates, and a ribonuclease H (RNase H) activity that cleaves the RNA strand of RNA-DNA heteroduplexes during plus-strand synthesis and hydrolyzes RNA primers. The conversion leads to a linear dsDNA copy of the retrotransposon that includes long terminal repeats (LTRs) at both ends. Functionally, integrase (IN) targets the VLP to the nucleus, where a subparticle preintegration complex (PIC) containing at least integrase and the newly synthesized dsDNA copy of the retrotransposon must transit the nuclear membrane. Once in the nucleus, integrase performs the integration of the dsDNA into the host genome. This is Transposon Ty1-ML1 Gag-Pol polyprotein (TY1B-ML1) from Saccharomyces cerevisiae (strain ATCC 204508 / S288c) (Baker's yeast).